We begin with the raw amino-acid sequence, 209 residues long: Large ribosomal subunit protein uL3 (209 aa).

Residues 118-152 (GFQGAIKRHGQSRGPMSHGSRYHRRPGSMGPVDPN) are disordered.

The protein belongs to the universal ribosomal protein uL3 family. In terms of assembly, part of the 50S ribosomal subunit. Forms a cluster with proteins L14 and L19.

One of the primary rRNA binding proteins, it binds directly near the 3'-end of the 23S rRNA, where it nucleates assembly of the 50S subunit. This Bacillus licheniformis (strain ATCC 14580 / DSM 13 / JCM 2505 / CCUG 7422 / NBRC 12200 / NCIMB 9375 / NCTC 10341 / NRRL NRS-1264 / Gibson 46) protein is Large ribosomal subunit protein uL3.